The chain runs to 591 residues: Glutathione S-transferase T2 (591 aa).

In terms of domain architecture, GST N-terminal spans 1-82 (MKLKVYADRM…YLSSAYASVV (82 aa)). Glutathione-binding positions include 11 to 12 (SQ), 40 to 41 (QL), 53 to 54 (KV), and 66 to 67 (ES). A GST C-terminal domain is found at 89-226 (DLSKRAKIHS…EVLFRAKDRF (138 aa)). The disordered stretch occupies residues 229–272 (QREMATASKPGPQSKIIQFSSIGGTSDGPNLVQDTTDRKARRRK). Residues 243–262 (KIIQFSSIGGTSDGPNLVQD) are compositionally biased toward polar residues. The Myb-like domain occupies 265–338 (DRKARRRKWS…HCRQRWRKIN (74 aa)).

The protein belongs to the GST superfamily. Theta family.

It is found in the peroxisome. The catalysed reaction is RX + glutathione = an S-substituted glutathione + a halide anion + H(+). Its function is as follows. May be involved in the conjugation of reduced glutathione to a wide number of exogenous and endogenous hydrophobic electrophiles and have a detoxification role against certain herbicides. The chain is Glutathione S-transferase T2 (GSTT2) from Arabidopsis thaliana (Mouse-ear cress).